The chain runs to 200 residues: Large ribosomal subunit protein uL4 (200 aa).

Residues R43–I72 form a disordered region.

The protein belongs to the universal ribosomal protein uL4 family. Part of the 50S ribosomal subunit.

Functionally, one of the primary rRNA binding proteins, this protein initially binds near the 5'-end of the 23S rRNA. It is important during the early stages of 50S assembly. It makes multiple contacts with different domains of the 23S rRNA in the assembled 50S subunit and ribosome. Forms part of the polypeptide exit tunnel. This is Large ribosomal subunit protein uL4 from Haemophilus ducreyi (strain 35000HP / ATCC 700724).